Reading from the N-terminus, the 114-residue chain is Small ribosomal subunit protein bS6 (114 aa).

The protein belongs to the bacterial ribosomal protein bS6 family.

Binds together with bS18 to 16S ribosomal RNA. This chain is Small ribosomal subunit protein bS6, found in Bacteroides thetaiotaomicron (strain ATCC 29148 / DSM 2079 / JCM 5827 / CCUG 10774 / NCTC 10582 / VPI-5482 / E50).